The primary structure comprises 348 residues: Dihydroorotase (348 aa).

2 residues coordinate Zn(2+): H17 and H19. Substrate-binding positions include 19 to 21 (HLR) and N45. Residues K103, H140, and H178 each coordinate Zn(2+). The residue at position 103 (K103) is an N6-carboxylysine. H140 is a substrate binding site. L223 is a substrate binding site. D251 is a binding site for Zn(2+). Residue D251 is part of the active site. Substrate is bound by residues H255 and A267.

It belongs to the metallo-dependent hydrolases superfamily. DHOase family. Class II DHOase subfamily. Homodimer. It depends on Zn(2+) as a cofactor.

It catalyses the reaction (S)-dihydroorotate + H2O = N-carbamoyl-L-aspartate + H(+). It functions in the pathway pyrimidine metabolism; UMP biosynthesis via de novo pathway; (S)-dihydroorotate from bicarbonate: step 3/3. Catalyzes the reversible cyclization of carbamoyl aspartate to dihydroorotate. This chain is Dihydroorotase, found in Edwardsiella ictaluri (strain 93-146).